A 655-amino-acid chain; its full sequence is p-hydroxybenzoic acid efflux pump subunit AaeB (655 aa).

11 helical membrane passes run 13–33, 38–58, 69–89, 93–113, 121–141, 152–172, 370–390, 407–427, 431–451, 455–475, and 482–502; these read FAVK…HFQL, WAVL…GGEP, LRII…IAMI, LLMI…SSLV, WGLA…EPLL, EIVI…PRSI, LFWL…IAVV, FIYG…VIIP, QSML…GIEV, LLGS…DNPM, and FLDS…VILL.

Belongs to the aromatic acid exporter ArAE (TC 2.A.85) family.

The protein localises to the cell inner membrane. Functionally, forms an efflux pump with AaeA. Could function as a metabolic relief valve, allowing to eliminate certain compounds when they accumulate to high levels in the cell. The chain is p-hydroxybenzoic acid efflux pump subunit AaeB from Shigella boydii serotype 4 (strain Sb227).